A 1168-amino-acid chain; its full sequence is MDDLKELEYLSLVSKVASEIRNHTGIDDNTLAEFIINLHDQSKNYDEFKNNVLSCGGEFTDSFLQNISRLIKEIKPKDDIPTDNVNNGSNSVNGASHDLDSKDVDKQHQRKMFPGLSIPNSTNNLRDRPALMDNAMDELEELSTLAKTRRNDRDSRRDERHYLNGIRERRERSISPSFSHHSRTSISGQSHSSRSSRGPLLNAPTLYGIYSGVVSGIKDFGAFVTLDGFRKRTDGLVHISNIQLNGRLDHPSEAVSYGQPVFVKVIRIDESAKRISLSMKEVNQVTGEDLNPDQVSRSTKKGSGANAIPLSAQNSEIGHVNPLETFTSNGRKRLTSPEIWELQQLAASGAISATDIPELNDGFNTNNAAEINPEDDEDVEIELREEEPGFLAGQTKVSLKLSPIKVVKAPDGSLSRAAMQGQILANDRREIRQKEAKLKSEQEMEKQDLSLSWQDTMSNPQDRKFAQDVRDSAARQLTSETPSWRQATRNANISYGKRTTLSMKEQREGLPVFKLRKQFLEAVSKNQILVLLGETGSGKTTQITQYLAEEGYTSDSKMIGCTQPRRVAAMSVAKRVAEEVGCRVGEEVGYTIRFEDKTSRMTQIKYMTDGMLQRECLVDPLLSKYSVIILDEAHERTVATDVLFGLLKGTVLKRPDLKLIVTSATLDAERFSSYFYKCPIFTIPGRSYPVEIMYTKQPEADYLDAALMTVMQIHLSEGPGDILVFLTGQEEIDTSCEILYERSKMLGDSIPELVILPVYSALPSEIQSRIFEPAPPGGRKVVIATNIAETSLTIDGIYYVVDPGFVKQSCFDPKLGMDSLIVTPISQAQARQRSGRAGRTGPGKCYRLYTESAYRNEMLPSPIPEIQRQNLSHTILMLKAMGINDLLNFDFMDPPPAQTMIAALQNLYALSALDDEGLLTPLGRKMADFPMEPQLSKVLITSVELGCSEEMLSIIAMLSVPNIWSRPREKQQEADRQRAQFANPESDHLTLLNVYTTWKMNRCSDNWCYEHYIQARGMRRAEDVRKQLIRLMDRYRHPVVSCGRKRELILRALCSGYFTNVAKRDSHEGCYKTIVENAPVYMHPSGVLFGKAAEWVIYHELIQTSKEYMHTVSTVNPKWLVEVAPTFFKFANANQVSKTKKNLKVLPLYNRFEKPDEWRISKQRKGGR.

2 disordered regions span residues 77 to 100 (KDDI…HDLD) and 144 to 197 (TLAK…RSSR). The span at 84 to 94 (NVNNGSNSVNG) shows a compositional bias: low complexity. Residues 149-173 (RRNDRDSRRDERHYLNGIRERRERS) are compositionally biased toward basic and acidic residues. Residues 184 to 197 (TSISGQSHSSRSSR) are compositionally biased toward low complexity. An S1 motif domain is found at 207–280 (YGIYSGVVSG…SAKRISLSMK (74 aa)). Residues 287–314 (GEDLNPDQVSRSTKKGSGANAIPLSAQN) form a disordered region. Residues 520–684 (LEAVSKNQIL…FYKCPIFTIP (165 aa)) form the Helicase ATP-binding domain. 533-540 (GETGSGKT) contributes to the ATP binding site. The DEAH box signature appears at 631-634 (DEAH). One can recognise a Helicase C-terminal domain in the interval 702–882 (YLDAALMTVM…HTILMLKAMG (181 aa)).

This sequence belongs to the DEAD box helicase family. DEAH subfamily. DDX8/PRP22 sub-subfamily. As to quaternary structure, belongs to the 40S cdc5-associated complex (or cwf complex), a spliceosome sub-complex reminiscent of a late-stage spliceosome composed of the U2, U5 and U6 snRNAs and at least brr2, cdc5, cwf2/prp3, cwf3/syf1, cwf4/syf3, cwf5/ecm2, spp42/cwf6, cwf7/spf27, cwf8, cwf9, cwf10, cwf11, cwf12, prp45/cwf13, cwf14, cwf15, cwf16, cwf17, cwf18, cwf19, cwf20, cwf21, cwf22, cwf23, cwf24, cwf25, cwf26, cyp7/cwf27, cwf28, cwf29/ist3, lea1, msl1, prp5/cwf1, prp10, prp12/sap130, prp17, prp22, sap61, sap62, sap114, sap145, slu7, smb1, smd1, smd3, smf1, smg1 and syf2.

It is found in the nucleus. The catalysed reaction is ATP + H2O = ADP + phosphate + H(+). Functionally, acts late in the splicing of pre-mRNA. Required for the splicing of introns with a branch nucleotide to 3'-splice site distance greater or equal to 15. Mediates the release of the spliced mRNA from spliceosomes. This is Pre-mRNA-splicing factor ATP-dependent RNA helicase prp22 (prp22) from Schizosaccharomyces pombe (strain 972 / ATCC 24843) (Fission yeast).